We begin with the raw amino-acid sequence, 314 residues long: Aspartate carbamoyltransferase catalytic subunit (314 aa).

Positions 58 and 59 each coordinate carbamoyl phosphate. Lys-86 serves as a coordination point for L-aspartate. The carbamoyl phosphate site is built by Arg-108, His-136, and Gln-139. 2 residues coordinate L-aspartate: Arg-169 and Arg-223. Positions 264 and 265 each coordinate carbamoyl phosphate.

This sequence belongs to the aspartate/ornithine carbamoyltransferase superfamily. ATCase family. As to quaternary structure, heterododecamer (2C3:3R2) of six catalytic PyrB chains organized as two trimers (C3), and six regulatory PyrI chains organized as three dimers (R2).

The enzyme catalyses carbamoyl phosphate + L-aspartate = N-carbamoyl-L-aspartate + phosphate + H(+). It functions in the pathway pyrimidine metabolism; UMP biosynthesis via de novo pathway; (S)-dihydroorotate from bicarbonate: step 2/3. Functionally, catalyzes the condensation of carbamoyl phosphate and aspartate to form carbamoyl aspartate and inorganic phosphate, the committed step in the de novo pyrimidine nucleotide biosynthesis pathway. The chain is Aspartate carbamoyltransferase catalytic subunit from Jannaschia sp. (strain CCS1).